A 563-amino-acid chain; its full sequence is Cystathionine gamma-synthase-like protein ankD (563 aa).

The disordered stretch occupies residues 1 to 37; it reads MGELGPASAQHGSDSISFSGSYTQPLGAPQPPNEPHA. Over residues 10-24 the composition is skewed to polar residues; sequence QHGSDSISFSGSYTQ.

Belongs to the trans-sulfuration enzymes family. MET7 subfamily. Pyridoxal 5'-phosphate serves as cofactor.

The catalysed reaction is cyclo(L-arginyl-(Z)-dehydro-3,4-dihydroxytyrosyl) + O-acetyl-L-homoserine = cyclo(L-arginyl-(Z)-dehydro-4-O-homoseryl-tyrosyl) + acetate + H(+). It participates in secondary metabolite biosynthesis. Functionally, cystathionine gamma-synthase-like protein; part of the ank cluster that mediates the biosynthesis of NK13650 C, a highly modified cyclo-arginine-tyrosine dipeptide. AnkD catalyzes the attachment of L-homoserine moiety using O-acetyl-L-homoserine as co-substrate. Within the pathway, the cyclodipeptide synthase ankA acts as the scaffold-generating enzyme and is responsible for formation of the cyclo-Arg-Tyr diketopiperazine (cRY) from L-Arg and L-Tyr. The ankA product cRY is desaturated by the cytochrome P450 monooxygenase ankB to yield a dehydro-cyclodipeptide intermediate. The FAD-dependent monooxygenase ankC then installs the m-OH, ankD catalyzes the attachment of L-homoserine, and ankE ligates citrate to the ankD product to yield NK13650 B. The O-methyltransferase ankF is responsible for methylation of the C-17 phenol group of NK13650 B to produce NK13650 D. Amidation of NK13650 D with L-Asp by ankG then leads to the production of NK13650 C, whereas amidation of NK13650 B produces NK13650 A. The sequence is that of Cystathionine gamma-synthase-like protein ankD from Aspergillus thermomutatus (Neosartorya pseudofischeri).